We begin with the raw amino-acid sequence, 504 residues long: Activin receptor type-1-like (504 aa).

A signal peptide spans methionine 1–threonine 20. Over lysine 21–proline 121 the chain is Extracellular. A glycan (N-linked (GlcNAc...) asparagine) is linked at asparagine 34. Intrachain disulfides connect cysteine 35/cysteine 52, cysteine 37/cysteine 42, and cysteine 47/cysteine 70. The mediates specificity for BMP ligand stretch occupies residues asparagine 74–leucine 77. Cystine bridges form between cysteine 78–cysteine 90 and cysteine 91–cysteine 96. Asparagine 99 carries an N-linked (GlcNAc...) asparagine glycan. The helical transmembrane segment at leucine 122 to tryptophan 142 threads the bilayer. At arginine 143 to histidine 504 the chain is on the cytoplasmic side. A phosphoserine mark is found at serine 156, serine 161, and serine 162. Residues serine 173–glutamine 202 enclose the GS domain. Residues valine 203–histidine 504 enclose the Protein kinase domain. Residues valine 209–valine 217 and lysine 230 each bind ATP. Aspartate 331 serves as the catalytic Proton acceptor.

It belongs to the protein kinase superfamily. TKL Ser/Thr protein kinase family. TGFB receptor subfamily. In terms of assembly, interacts with TSC22D1/TSC-22. Mg(2+) serves as cofactor. Mn(2+) is required as a cofactor. Urogenital ridge, testis, ovary, brain and lung. In lung, found exclusively in pulmonary vessels of all sizes. Also expressed in aorta, vena cava and certain blood vessels of kidney, spleen, heart and intestine. For most blood vessels, a higher level of expression is found in endothelium than in adjacent smooth muscle.

It is found in the cell membrane. It catalyses the reaction L-threonyl-[receptor-protein] + ATP = O-phospho-L-threonyl-[receptor-protein] + ADP + H(+). The enzyme catalyses L-seryl-[receptor-protein] + ATP = O-phospho-L-seryl-[receptor-protein] + ADP + H(+). Functionally, type I receptor for TGF-beta family ligands BMP9/GDF2 and BMP10 and important regulator of normal blood vessel development. On ligand binding, forms a receptor complex consisting of two type II and two type I transmembrane serine/threonine kinases. Type II receptors phosphorylate and activate type I receptors which autophosphorylate, then bind and activate SMAD transcriptional regulators. May bind activin as well. The polypeptide is Activin receptor type-1-like (Acvrl1) (Rattus norvegicus (Rat)).